The sequence spans 298 residues: S-adenosylmethionine-dependent nucleotide dehydratase (298 aa).

The Radical SAM core domain maps to 8-235 (ANKELVVNWH…QRFGEIIYAE (228 aa)). Residues Cys22, Cys26, and Cys29 each contribute to the [4Fe-4S] cluster site.

Belongs to the radical SAM superfamily. Viperin family. [4Fe-4S] cluster serves as cofactor.

The enzyme catalyses CTP + AH2 + S-adenosyl-L-methionine = 3'-deoxy-3',4'-didehydro-CTP + 5'-deoxyadenosine + L-methionine + A + H2O + H(+). The catalysed reaction is UTP + AH2 + S-adenosyl-L-methionine = 3'-deoxy-3',4'-didehydro-UTP + 5'-deoxyadenosine + L-methionine + A + H2O + H(+). Functionally, expression of pVip8 in E.coli (strain MG1655) confers resistance to phages lambda, P1, SECphi8 and T7. Prevents culture collapse upon infection with T7. Catalyzes the conversion of cytidine triphosphate (CTP) to 3'-deoxy-3',4'-didehydro-CTP (ddhCTP) and uridine triphosphate (UTP) to 3'-deoxy-3',4'-didehydro-UTP (ddhUTP), probably via a SAM-dependent radical mechanism. The modified nucleotides repress transcription from T7 RNA polymerase-directed genes (possibly by acting as chain terminators), strongly suggesting these nucleotides block viral polymerase transcription. The protein is S-adenosylmethionine-dependent nucleotide dehydratase of Psychrobacter lutiphocae (strain DSM 21542 / CCUG 56590 / IMMIB L-1110).